A 191-amino-acid polypeptide reads, in one-letter code: Xanthine phosphoribosyltransferase (191 aa).

Xanthine is bound by residues Leu20 and Asn27. 128-132 (ANGQA) lines the 5-phospho-alpha-D-ribose 1-diphosphate pocket. Lys156 is a binding site for xanthine.

This sequence belongs to the purine/pyrimidine phosphoribosyltransferase family. Xpt subfamily. As to quaternary structure, homodimer.

Its subcellular location is the cytoplasm. It catalyses the reaction XMP + diphosphate = xanthine + 5-phospho-alpha-D-ribose 1-diphosphate. Its pathway is purine metabolism; XMP biosynthesis via salvage pathway; XMP from xanthine: step 1/1. Its function is as follows. Converts the preformed base xanthine, a product of nucleic acid breakdown, to xanthosine 5'-monophosphate (XMP), so it can be reused for RNA or DNA synthesis. The sequence is that of Xanthine phosphoribosyltransferase from Acinetobacter baumannii (strain AB307-0294).